The chain runs to 463 residues: Gamma-aminobutyric acid receptor subunit alpha-5 (463 aa).

An N-terminal signal peptide occupies residues 1–25; it reads MDNGMLSRFIMTQTLLVFCISMTLS. Topologically, residues 26-260 are extracellular; the sequence is SHFGFSQMPT…FHLKRKIGYF (235 aa). Asn-45 is a glycosylation site (N-linked (GlcNAc...) asparagine). Residue Arg-101 coordinates 4-aminobutanoate. Asn-145 is a glycosylation site (N-linked (GlcNAc...) asparagine). Residue Thr-164 coordinates 4-aminobutanoate. A disulfide bond links Cys-173 and Cys-187. 2 N-linked (GlcNAc...) asparagine glycosylation sites follow: Asn-207 and Asn-236. The next 3 membrane-spanning stretches (helical) occupy residues 261–281, 287–308, and 319–340; these read VIQT…SFWL, PART…ISAR, and AMDW…EFAT. At 341–428 the chain is on the cytoplasmic side; that stretch reads VNYFTKRGWA…TYNSISKIDK (88 aa). Lys-355 participates in a covalent cross-link: Glycyl lysine isopeptide (Lys-Gly) (interchain with G-Cter in ubiquitin). The disordered stretch occupies residues 387-408; it reads PNIPKEQPPAGTANAPTVSIKA. A helical membrane pass occupies residues 429–449; the sequence is MSRIVFPILFGTFNLVYWATY.

It belongs to the ligand-gated ion channel (TC 1.A.9) family. Gamma-aminobutyric acid receptor (TC 1.A.9.5) subfamily. GABRA5 sub-subfamily. Heteropentamer, formed by a combination of alpha (GABRA1-6), beta (GABRB1-3), gamma (GABRG1-3), delta (GABRD), epsilon (GABRE), rho (GABRR1-3), pi (GABRP) and theta (GABRQ) chains, each subunit exhibiting distinct physiological and pharmacological properties. Expressed in brain, in hippocampal pyramidal neurons.

It is found in the postsynaptic cell membrane. The protein localises to the cell membrane. It carries out the reaction chloride(in) = chloride(out). Functionally, alpha subunit of the heteropentameric ligand-gated chloride channel gated by gamma-aminobutyric acid (GABA), a major inhibitory neurotransmitter in the brain. GABA-gated chloride channels, also named GABA(A) receptors (GABAAR), consist of five subunits arranged around a central pore and contain GABA active binding site(s) located at the alpha and beta subunit interface(s). When activated by GABA, GABAARs selectively allow the flow of chloride anions across the cell membrane down their electrochemical gradient. GABAARs containing alpha-5/GABRA5 are mainly extrasynaptic and contribute to the tonic GABAergic inhibition of the hippocampus. Extrasynaptic alpha-5-containing GABAARs in CA1 pyramidal neurons play a role in learning and memory processes. In Mus musculus (Mouse), this protein is Gamma-aminobutyric acid receptor subunit alpha-5.